Consider the following 431-residue polypeptide: BEL1-like homeodomain protein 5 (431 aa).

An SR/KY domain region spans residues 80–96 (PIYLKAAQELLNEIVNV). The tract at residues 128-199 (GVAALQMKKA…AVKDMISLQI (72 aa)) is BELL domain. The segment at residues 228 to 290 (AWRPQRGLPE…NARVRMWKPL (63 aa)) is a DNA-binding region (homeobox). Positions 302–312 (EESRKGSDRYS) are enriched in basic and acidic residues. Positions 302–333 (EESRKGSDRYSTKGSSSKQPYNNTTSNESSNT) are disordered. The span at 313–322 (TKGSSSKQPY) shows a compositional bias: polar residues. Over residues 323 to 333 (NNTTSNESSNT) the composition is skewed to low complexity.

The protein belongs to the TALE/BELL homeobox family. May form heterodimeric complexes with TALE/KNOX proteins. Interacts with OFP1.

It is found in the nucleus. This is BEL1-like homeodomain protein 5 (BLH5) from Arabidopsis thaliana (Mouse-ear cress).